A 460-amino-acid polypeptide reads, in one-letter code: Bifunctional protein GlmU (460 aa).

A pyrophosphorylase region spans residues 1–235; sequence MTLTAAIVLA…PLSVEGVNDR (235 aa). UDP-N-acetyl-alpha-D-glucosamine-binding positions include 9–12, K23, Q76, and 81–82; these read LAAG and GT. Mg(2+) is bound at residue D109. Residues G146, E161, N176, and N233 each coordinate UDP-N-acetyl-alpha-D-glucosamine. N233 lines the Mg(2+) pocket. The segment at 236–256 is linker; the sequence is VQLASLAKAHNLRVCRQWMLD. The interval 257–460 is N-acetyltransferase; sequence GVTIVDPQTT…VDNWKPAWER (204 aa). UDP-N-acetyl-alpha-D-glucosamine-binding residues include R338 and K356. H368 functions as the Proton acceptor in the catalytic mechanism. Y371 and N382 together coordinate UDP-N-acetyl-alpha-D-glucosamine. Acetyl-CoA-binding positions include 391-392 and A428; that span reads NY.

This sequence in the N-terminal section; belongs to the N-acetylglucosamine-1-phosphate uridyltransferase family. The protein in the C-terminal section; belongs to the transferase hexapeptide repeat family. As to quaternary structure, homotrimer. It depends on Mg(2+) as a cofactor.

Its subcellular location is the cytoplasm. The enzyme catalyses alpha-D-glucosamine 1-phosphate + acetyl-CoA = N-acetyl-alpha-D-glucosamine 1-phosphate + CoA + H(+). The catalysed reaction is N-acetyl-alpha-D-glucosamine 1-phosphate + UTP + H(+) = UDP-N-acetyl-alpha-D-glucosamine + diphosphate. The protein operates within nucleotide-sugar biosynthesis; UDP-N-acetyl-alpha-D-glucosamine biosynthesis; N-acetyl-alpha-D-glucosamine 1-phosphate from alpha-D-glucosamine 6-phosphate (route II): step 2/2. It functions in the pathway nucleotide-sugar biosynthesis; UDP-N-acetyl-alpha-D-glucosamine biosynthesis; UDP-N-acetyl-alpha-D-glucosamine from N-acetyl-alpha-D-glucosamine 1-phosphate: step 1/1. Its pathway is bacterial outer membrane biogenesis; LPS lipid A biosynthesis. Catalyzes the last two sequential reactions in the de novo biosynthetic pathway for UDP-N-acetylglucosamine (UDP-GlcNAc). The C-terminal domain catalyzes the transfer of acetyl group from acetyl coenzyme A to glucosamine-1-phosphate (GlcN-1-P) to produce N-acetylglucosamine-1-phosphate (GlcNAc-1-P), which is converted into UDP-GlcNAc by the transfer of uridine 5-monophosphate (from uridine 5-triphosphate), a reaction catalyzed by the N-terminal domain. This chain is Bifunctional protein GlmU, found in Bifidobacterium animalis subsp. lactis (strain AD011).